A 132-amino-acid polypeptide reads, in one-letter code: uncharacterized protein (132 aa).

A signal peptide spans 1–25 (MRFTKVVGFLSVLGLAAVFPLTAQA).

This is an uncharacterized protein from Bacillus subtilis (strain 168).